Here is a 608-residue protein sequence, read N- to C-terminus: Rap1 GTPase-GDP dissociation stimulator 1 (608 aa).

ARM repeat units follow at residues Gly-89–Gly-131 and Asp-171–Glu-212. Positions Glu-122–Asp-171 are prevents binding to prenylated RHOA. Lys-231 is modified (N6-acetyllysine). 3 ARM repeats span residues Asp-348–Ile-391, Pro-392–Asp-432, and Ser-480–Ala-520.

Interacts with RABL3. Interacts with RHOT1. As to quaternary structure, interacts with unprenylated RHOA; the interaction is direct. Interacts with RAP1A. Interacts with KRAS. Interacts with RAC1. Interacts with RAP1B. Preferentially interacts with unprenylated GTPases that will become geranylgeranylated. May also interact with prenylated GTPases. In terms of assembly, interacts with prenylated RHOA; the interaction is direct and in a 1:1 stoichiometry. Interacts with RAP1A. Interacts with KRAS. Interacts with RAC1. Interacts with RAP1B. Preferentially interacts with prenylated GTPases. The N-terminus is blocked. In terms of processing, forms covalent cross-links mediated by transglutaminase TGM2, between a glutamine and the epsilon-amino group of a lysine residue, forming homopolymers and heteropolymers. As to expression, brain.

Its subcellular location is the cytoplasm. It is found in the cytosol. The protein resides in the endoplasmic reticulum. The protein localises to the mitochondrion. It localises to the nucleus. In terms of biological role, acts as a GEF (guanine nucleotide exchange factor) for the Rho family of small GTP-binding proteins (G proteins) that stimulates the dissociation of GDP to enable subsequent binding of GTP. Additionally, appears to chaperone the processing and/or trafficking of small GTPases containing a C-terminal polybasic region independently of GEF activity. Targets include RAP1A/RAP1B, RHOA, RHOB, RHOC, RAC1 and KRAS. Regulates mitochondrial dynamics by controlling RHOT function to promote mitochondrial fission during high calcium conditions. Able to promote the Ca(2+) release from the endoplasmic reticulum via both inositol trisphosphate (Ins3P) and ryanodine sensitive receptors leading to a enhanced mitochondrial Ca(2+) uptake. Acts as a GEF (guanine nucleotide exchange factor) for unprenylated RHOA. Chaperones the entry and passage of small GTPases through the prenylation pathway. Recognizes the last amino acid in the GTPase C-terminal CAAX motif with a preference for 'Leu' over 'Met', indicating involvement in the geranylgeranylation pathway. May also recognize prenylated GTPases. Its function is as follows. Acts as a GEF (guanine nucleotide exchange factor) for prenylated RHOA. Acts as a GEF for RHOC. Chaperones the downstream trafficking and/or processing of small newly prenylated GTPases. Escorts RAC1 to the nucleus. The chain is Rap1 GTPase-GDP dissociation stimulator 1 (RAP1GDS1) from Bos taurus (Bovine).